The chain runs to 335 residues: Glyceraldehyde-3-phosphate dehydrogenase 2 (335 aa).

NAD(+) is bound by residues 13 to 14 (TI) and glycine 111. Residue 140-142 (SCN) participates in D-glyceraldehyde 3-phosphate binding. Cysteine 141 acts as the Nucleophile in catalysis. Residue arginine 169 coordinates NAD(+). D-glyceraldehyde 3-phosphate-binding positions include threonine 171 and 195–196 (HG). Glutamine 300 provides a ligand contact to NAD(+).

This sequence belongs to the glyceraldehyde-3-phosphate dehydrogenase family. Homotetramer.

Its subcellular location is the cytoplasm. It carries out the reaction D-glyceraldehyde 3-phosphate + phosphate + NADP(+) = (2R)-3-phospho-glyceroyl phosphate + NADPH + H(+). The enzyme catalyses D-glyceraldehyde 3-phosphate + phosphate + NAD(+) = (2R)-3-phospho-glyceroyl phosphate + NADH + H(+). Its pathway is carbohydrate degradation; glycolysis; pyruvate from D-glyceraldehyde 3-phosphate: step 1/5. The sequence is that of Glyceraldehyde-3-phosphate dehydrogenase 2 (gapB) from Methanosarcina acetivorans (strain ATCC 35395 / DSM 2834 / JCM 12185 / C2A).